The following is a 216-amino-acid chain: MLPKNPIIGLCQQASFLISAAKVDQCPEDSGLEVAFAGRSNAGKSSALNTLTHASLARTSKTPGRTQLLNFFRLDDERRLVDLPGYGYAKVPIPLKQHWQKHLEAYLGSRESLCGLVLMMDIRHPLTEFDRMMLDWSVASGMPLHILLTKADKLAFGAAKNALLKVRQEIRKQWGEGISIQLFSAPKRMGVEEAQMVLAGWLDLLPQEDEESAEEA.

Positions 30–204 constitute an EngB-type G domain; that stretch reads SGLEVAFAGR…QMVLAGWLDL (175 aa). GTP-binding positions include 38 to 45, 64 to 68, 82 to 85, 149 to 152, and 182 to 185; these read GRSNAGKS, GRTQL, DLPG, TKAD, and LFSA. Positions 45 and 66 each coordinate Mg(2+).

This sequence belongs to the TRAFAC class TrmE-Era-EngA-EngB-Septin-like GTPase superfamily. EngB GTPase family. Mg(2+) is required as a cofactor.

Functionally, necessary for normal cell division and for the maintenance of normal septation. The protein is Probable GTP-binding protein EngB of Ectopseudomonas mendocina (strain ymp) (Pseudomonas mendocina).